The sequence spans 137 residues: Large ribosomal subunit protein uL16 (137 aa).

The protein belongs to the universal ribosomal protein uL16 family. As to quaternary structure, part of the 50S ribosomal subunit.

In terms of biological role, binds 23S rRNA and is also seen to make contacts with the A and possibly P site tRNAs. This is Large ribosomal subunit protein uL16 from Xylella fastidiosa (strain M23).